A 211-amino-acid polypeptide reads, in one-letter code: Urease accessory protein UreF (211 aa).

Belongs to the UreF family. In terms of assembly, ureD, UreF and UreG form a complex that acts as a GTP-hydrolysis-dependent molecular chaperone, activating the urease apoprotein by helping to assemble the nickel containing metallocenter of UreC. The UreE protein probably delivers the nickel.

The protein resides in the cytoplasm. Its function is as follows. Required for maturation of urease via the functional incorporation of the urease nickel metallocenter. The polypeptide is Urease accessory protein UreF (Mycobacterium sp. (strain JLS)).